Consider the following 323-residue polypeptide: Malate dehydrogenase (323 aa).

An NAD(+)-binding site is contributed by 11–17; sequence GAAGQIA. The substrate site is built by Arg-92 and Arg-98. Residues Asn-105, Gln-112, and 129-131 each bind NAD(+); that span reads VGN. Residues Asn-131 and Arg-162 each contribute to the substrate site. The active-site Proton acceptor is the His-187.

This sequence belongs to the LDH/MDH superfamily. MDH type 2 family.

It catalyses the reaction (S)-malate + NAD(+) = oxaloacetate + NADH + H(+). Catalyzes the reversible oxidation of malate to oxaloacetate. The chain is Malate dehydrogenase from Corynebacterium efficiens (strain DSM 44549 / YS-314 / AJ 12310 / JCM 11189 / NBRC 100395).